The chain runs to 555 residues: Anaerobic magnesium-protoporphyrin IX monomethyl ester cyclase (555 aa).

The B12-binding domain maps to 9-143 (NYHSGGAEIA…TAVDQGRFMA (135 aa)). The Radical SAM core domain maps to 191 to 416 (PMNKRVAIPN…MKPDAMDRGE (226 aa)). [4Fe-4S] cluster contacts are provided by Cys205, Cys209, and Cys212.

This sequence belongs to the BchE family. [4Fe-4S] cluster serves as cofactor. Adenosylcob(III)alamin is required as a cofactor.

It carries out the reaction Mg-protoporphyrin IX 13-monomethyl ester + 3 S-adenosyl-L-methionine + H2O = 3,8-divinyl protochlorophyllide a + 3 5'-deoxyadenosine + 3 L-methionine + 4 H(+). The protein operates within porphyrin-containing compound metabolism; bacteriochlorophyll biosynthesis (light-independent). In terms of biological role, involved in the tetrapyrrole biosynthetic pathways leading to chlorophyll and bacteriochlorophyll (BChl). Catalyzes the anaerobic formation of the isocyclic ring (E-ring) in Mg-protoporphyrin monomethyl ester (MPE) to yield protochlorophyllide a (PChlide a) via a six-electron oxidation and the formation of an oxo group at position C13 using oxygen from a water molecule. The chain is Anaerobic magnesium-protoporphyrin IX monomethyl ester cyclase (bchE) from Rubrivivax gelatinosus (Rhodocyclus gelatinosus).